The chain runs to 187 residues: Flavin-dependent monooxygenase, reductase subunit HsaB (187 aa).

Residues 32–36, 38–39, 53–55, 59–60, and 85–86 contribute to the FAD site; these read PVGFA, QS, CPT, RS, and RF. NAD(+) is bound at residue 152–155; sequence FYRG.

The protein belongs to the non-flavoprotein flavin reductase family. In terms of assembly, hsaAB monooxygenase consists of an oxygenase component HsaA and a reductase component HsaB.

It catalyses the reaction a reduced flavin + NAD(+) = an oxidized flavin + NADH + 2 H(+). It functions in the pathway lipid metabolism; steroid biosynthesis. Its function is as follows. Catalyzes the reduction of free flavins (FMN or FAD) by NADH. Subsequently, the reduced flavins diffuse to the HsaA oxygenase subunit. The polypeptide is Flavin-dependent monooxygenase, reductase subunit HsaB (hsaB) (Mycobacterium tuberculosis (strain CDC 1551 / Oshkosh)).